The chain runs to 322 residues: Protein-L-isoaspartate O-methyltransferase (322 aa).

The segment at 1-101 (MSGERAKRFP…AKQGDRSAAP (101 aa)) is disordered. The segment covering 14–29 (EDLKREPRKPEGRVAE) has biased composition (basic and acidic residues). 2 stretches are compositionally biased toward low complexity: residues 33–51 (AGDA…PAAA) and 67–91 (AANP…PQGG). S170 is a catalytic residue.

The protein belongs to the methyltransferase superfamily. L-isoaspartyl/D-aspartyl protein methyltransferase family.

The protein resides in the cytoplasm. It carries out the reaction [protein]-L-isoaspartate + S-adenosyl-L-methionine = [protein]-L-isoaspartate alpha-methyl ester + S-adenosyl-L-homocysteine. Functionally, catalyzes the methyl esterification of L-isoaspartyl residues in peptides and proteins that result from spontaneous decomposition of normal L-aspartyl and L-asparaginyl residues. It plays a role in the repair and/or degradation of damaged proteins. The protein is Protein-L-isoaspartate O-methyltransferase of Burkholderia pseudomallei (strain 668).